The primary structure comprises 1149 residues: Bone sialoprotein-binding protein (1149 aa).

Positions 1-52 are cleaved as a signal peptide; the sequence is MINRDNKKAITKKGMISNRLNKFSIRKYTVGTASILVGTTLIFGLGNQEAKA. The segment at 53 to 601 is ligand binding A region; sequence AENTSTENAK…GDGTVKPEEK (549 aa). Disordered regions lie at residues 54-249 and 675-697; these read ENTS…TAPT and LPTK…VTVK. Over residues 61 to 75 the composition is skewed to basic and acidic residues; it reads AKQDEASASDNKEVV. The segment covering 77-89 has biased composition (polar residues); the sequence is ETENNSTQKNDLT. Residues 92–106 are compositionally biased toward basic and acidic residues; sequence IKKETNTDSHQEAKE. A compositionally biased stretch (low complexity) spans 109-126; sequence TTSSTQQQQNNATTSTET. The span at 130-145 shows a compositional bias: basic and acidic residues; sequence NIEKENVKPSTDKTAT. Polar residues predominate over residues 158–205; the sequence is PNNTNNDVTTKPSTSEIQTTPTTPQESTNIENSQPQPTPSKVDNQVTD. The span at 216–241 shows a compositional bias: basic and acidic residues; that stretch reads SKEELKNNPEKLKELVRNDSNTDRST. 3 CNA-B domains span residues 602 to 714, 715 to 824, and 825 to 935; these read LYKI…YKEP, KYNL…YKTP, and KYSL…EEDT. The segment at 896–1124 is disordered; that stretch reads TQTGTNTTED…TGSENNGSNN (229 aa). 2 stretches are compositionally biased toward acidic residues: residues 903–913 and 930–1088; these read TEDDKDADGGE and YFEE…DSDS. The LPXTG sorting signal signature appears at 1112 to 1116; that stretch reads LPETG. Residue T1115 is modified to Pentaglycyl murein peptidoglycan amidated threonine. A propeptide spans 1116 to 1149 (removed by sortase); that stretch reads GSENNGSNNATLFGGLFAALGSLLLFGRRKKQNK.

The protein belongs to the serine-aspartate repeat-containing protein (SDr) family.

It localises to the secreted. The protein resides in the cell wall. In terms of biological role, specifically interacts with bone sialoprotein (BSP), a glycoprotein of bone and dentin extracellular matrix. Could contribute to staphylococcal osteomyelitis and arthritis. The chain is Bone sialoprotein-binding protein (bbp) from Staphylococcus aureus.